The primary structure comprises 231 residues: PQKLGLPVGRHVYVCASIGGKLCMRAYTPTSPVDEVGHFDLLIKIYFKDEDPKYPNGGLMSQYLDSLPLGATIDIKGPHRHIEYTGRRRFVVNGKQRHARRLAMIQAGRGTTPDDDTEQAVLRDQPDDDTEMHLVYANRTDHDMLLREEIDRAWLPRTRRLKVWYVVSKVPEDGWEYGVGRVDEHVMREHLPLGDSETIALVCGPPAMIECTVRPGLEKMGYDLDKACLVF.

One can recognise an FAD-binding FR-type domain in the interval 1-85 (PQKLGLPVGR…KGPHRHIEYT (85 aa)). FAD-binding positions include 25-28 (RAYT), 42-46 (LIKIY), F47, 59-61 (LMS), and T112.

The protein belongs to the nitrate reductase family. Homodimer. FAD serves as cofactor. Requires heme as cofactor. The cofactor is Mo-molybdopterin.

It carries out the reaction nitrite + NAD(+) + H2O = nitrate + NADH + H(+). The enzyme catalyses nitrite + NADP(+) + H2O = nitrate + NADPH + H(+). In terms of biological role, nitrate reductase is a key enzyme involved in the first step of nitrate assimilation in plants, fungi and bacteria. This chain is Nitrate reductase [NAD(P)H] (NAR), found in Zea mays (Maize).